Reading from the N-terminus, the 31-residue chain is Cliotide T10 (31 aa).

The segment at residues 1 to 31 (GIPCGESCVYIPCTVTALLGCSCKDKVCYKN) is a cross-link (cyclopeptide (Gly-Asn)). 3 disulfide bridges follow: C4-C21, C8-C23, and C13-C28.

Post-translationally, contains 3 disulfide bonds. In terms of processing, this is a cyclic peptide. In terms of tissue distribution, expressed in seed, root and nodule but not in flower, stem, shoot, leaf and pod (at protein level).

Functionally, probably participates in a plant defense mechanism. This chain is Cliotide T10, found in Clitoria ternatea (Butterfly pea).